The chain runs to 363 residues: Glutamate 5-kinase (363 aa).

An ATP-binding site is contributed by Lys-3. Ser-43, Asp-128, and Asn-140 together coordinate substrate. ATP is bound by residues Thr-160 to Asp-161 and Thr-202 to Lys-208. The region spanning Ala-267–Ser-349 is the PUA domain.

It belongs to the glutamate 5-kinase family.

The protein localises to the cytoplasm. It catalyses the reaction L-glutamate + ATP = L-glutamyl 5-phosphate + ADP. It participates in amino-acid biosynthesis; L-proline biosynthesis; L-glutamate 5-semialdehyde from L-glutamate: step 1/2. Catalyzes the transfer of a phosphate group to glutamate to form L-glutamate 5-phosphate. The chain is Glutamate 5-kinase from Xanthomonas axonopodis pv. citri (strain 306).